Here is a 406-residue protein sequence, read N- to C-terminus: Immediate early response gene 5-like protein (406 aa).

2 disordered regions span residues 166 to 195 (QPPHGAPHRGQHLEPLQPGPAPLPPPAPAA) and 216 to 235 (AAPSTVAASSPPASTAPSSS). Positions 182–193 (QPGPAPLPPPAP) are enriched in pro residues.

Belongs to the IER family.

The protein is Immediate early response gene 5-like protein (Ier5l) of Mus musculus (Mouse).